Reading from the N-terminus, the 251-residue chain is Hydroxyacylglutathione hydrolase (251 aa).

The Zn(2+) site is built by histidine 53, histidine 55, aspartate 57, histidine 58, histidine 110, aspartate 127, and histidine 165.

The protein belongs to the metallo-beta-lactamase superfamily. Glyoxalase II family. In terms of assembly, monomer. Requires Zn(2+) as cofactor.

It catalyses the reaction an S-(2-hydroxyacyl)glutathione + H2O = a 2-hydroxy carboxylate + glutathione + H(+). Its pathway is secondary metabolite metabolism; methylglyoxal degradation; (R)-lactate from methylglyoxal: step 2/2. In terms of biological role, thiolesterase that catalyzes the hydrolysis of S-D-lactoyl-glutathione to form glutathione and D-lactic acid. The protein is Hydroxyacylglutathione hydrolase of Escherichia coli (strain 55989 / EAEC).